The primary structure comprises 448 residues: Protein giant (448 aa).

Disordered regions lie at residues 23-47, 83-134, 238-259, and 298-363; these read MHHH…LPVQ, QQHQ…ASPT, VEAT…RPFK, and IRSS…TSSS. Positions 30–47 are enriched in low complexity; that stretch reads HHQQQPLHHLPHSQLPVQ. Residues 100–112 show a composition bias toward basic and acidic residues; sequence DLSRRCDSVETPR. Over residues 115-134 the composition is skewed to low complexity; the sequence is PSPYQTSYSYGSGSPSASPT. Residues 298-310 are compositionally biased toward polar residues; the sequence is IRSSNGGSRTVTN. Residues 318–333 show a composition bias toward low complexity; the sequence is SRSGSVNEGSSSNNNS. Residues 384 to 447 form the bZIP domain; it reads DAAYYERRRK…AAFTSAKVTT (64 aa). Residues 390-406 form a basic motif region; that stretch reads RRRKNNAAAKKSRDRRR. The leucine-zipper stretch occupies residues 407–414; it reads IKEDEIAI.

Belongs to the bZIP family. As to quaternary structure, homodimer or heterodimer. Post-translationally, phosphorylated at multiple sites.

The protein resides in the nucleus. Functionally, represses the expression of both the krueppel and knirps segmentation gap genes. Binds, in vitro, to the krueppel regulatory elements CD1 and CD2. It is required in the early embryo for the development of portions of the head and abdomen. This chain is Protein giant (gt), found in Drosophila melanogaster (Fruit fly).